Consider the following 328-residue polypeptide: Sin3 histone deacetylase corepressor complex component SDS3 (328 aa).

The tract at residues 1–64 (MSAAALLAPA…TDLAKHDEED (64 aa)) is disordered. Position 2 is an N-acetylserine (serine 2). Residues 2–170 (SAAALLAPAP…IENEKLTMEL (169 aa)) are mediates interaction with USP17L2. Residues 10–21 (APAPAGAPPAPE) show a composition bias toward pro residues. 2 stretches are compositionally biased toward acidic residues: residues 23-37 (YPEEDEELESAEDDE) and 45-54 (SDEDTEDASE). Phosphoserine occurs at positions 32 and 45. Threonine 49 is subject to Phosphothreonine. Residue serine 53 is modified to Phosphoserine. The stretch at 64–171 (DFVEMKEQMY…ENEKLTMELT (108 aa)) forms a coiled coil. Glycyl lysine isopeptide (Lys-Gly) (interchain with G-Cter in SUMO2) cross-links involve residues lysine 69, lysine 178, and lysine 201. Residues 226–252 (LKSPKRPASPSSPEHLPTTPAESPAQR) are disordered. Residues serine 228, serine 234, and serine 237 each carry the phosphoserine modification. Threonine 244 carries the post-translational modification Phosphothreonine.

The protein belongs to the SDS3 family. Homodimer. Component of the SIN3 histone deacetylase (HDAC) corepressor complex. Interacts with SIN3A. Interaction with SIN3B enhances the interaction between SIN3B and HDAC1 to form a complex. Interacts with HCFC1. Component of a mSin3A corepressor complex that contains SIN3A, SAP130, SUDS3/SAP45, ARID4B/SAP180, HDAC1 and HDAC2. Interacts with USP17L2; the interaction is direct. Interacts with FOXK2. Post-translationally, polyubiquitinated. 'Lys-63'-polyubiquitinated SUDS3 positively regulates histone deacetylation. Regulated through deubiquitination by USP17L2/USP17 that cleaves 'Lys-63'-linked ubiquitin chains.

It localises to the nucleus. Its function is as follows. Regulatory protein which represses transcription and augments histone deacetylase activity of HDAC1. May have a potential role in tumor suppressor pathways through regulation of apoptosis. May function in the assembly and/or enzymatic activity of the mSin3A corepressor complex or in mediating interactions between the complex and other regulatory complexes. This chain is Sin3 histone deacetylase corepressor complex component SDS3 (SUDS3), found in Bos taurus (Bovine).